The following is a 438-amino-acid chain: MTAGPMGNKSTSDIDSVLVYKSLSRYLKFSENEEGWWHKTAPLLNKILAAAKYDVHLQYRYLVFYYAACVSALGPYPQRFSSSITRSGLPVEFSVNYQNNSKPIVRIGYEPISHLSGTERDPYNHKTASEIVATLSKIQPDFDPRLFNYFVHQLSVNKAESDVLNGANVEGSEMKSQTAFGFDLVNGEISVKGYAFPAMKCQVSQQSLSQLLKAAINGLKGEFDCAFGLVDEYMERCGGYNQFSFVSWDCVVPAKSRFKVYGVHNDVTWKKIEDIWTLGGQATSGNVTKGLELLKELWTLIDLDEGERGYTGRFDDANDNGSNIQSPMVWNYELRPNNPWPLAKFYFPVHGENDMKIVKGLARFFENRGWTELARSYVQTVSSFFPDRDLNQTQRLVSWISFAYTEKTGVYLSVYYHSSADYLWISESGEKRGQGDGA.

Glutamate 92 lines the substrate pocket. Arginine 106, lysine 192, tyrosine 194, lysine 259, tyrosine 261, tyrosine 346, and tyrosine 411 together coordinate dimethylallyl diphosphate.

The protein belongs to the tryptophan dimethylallyltransferase family.

The catalysed reaction is (S)-3-(indol-3-ylmethyl)-6,7,8,8a-tetrahydropyrrolo[1,2-a]pyrazin-1-one + dimethylallyl diphosphate = (S)-3-{[2-(1,1-dimethylallyl)-indol-3-yl]methyl}-6,7,8,8a-tetrahydropyrrolo[1,2-a]pyrazin-1-one + diphosphate. The enzyme catalyses 1-hydroxy-3-(indol-3-ylmethyl)-6H,7H,8H-5lambda(5)-pyrrolo[1,2-a]pyrazine + dimethylallyl diphosphate = 1-hydroxy-3-{[2-(1,1-dimethylallyl)-indol-3-yl]methyl}-6H,7H,8H-5lambda(5)-pyrrolo[1,2-a]pyrazine + diphosphate. It functions in the pathway alkaloid biosynthesis. Prenyltransferase; part of the gene cluster that mediates the biosynthesis of malbrancheamide, a dichlorinated fungal indole alkaloid that belongs to a family of natural products containing a characteristic bicyclo[2.2.2]diazaoctane core. The first step of malbrancheamide biosynthesis involves coupling of L-proline and L-tryptophan by malG, a bimodular NRPS, to produce L-Pro-L-Trp aldehyde through reductive offloading. This compound undergoes spontaneous cyclization and dehydration to give a dienamine which is reverse prenylated at C-2 by malE. The other prenyltransferase present in the cluster, malB, displays modest activity, suggesting that may be a redundant gene in the pathway. Subsequently, a [4+2] Diels-Alder cyclo-addition catalyzed by the bifunctional enzyme malC forms the characteristic bicyclo[2.2.2]diazaoctane ring of premalbrancheamid. Finally, the flavin-dependent halogenase malA catalyzes the iterative dichlorination of the indole ring of premalbrancheamide to yield C-9 monochlorinated malbrancheamide B, C-8 monochlorinated isomalbrancheamide B, and dichlorinated malbrancheamide. MalA is also able to brominate premalbrancheamide at C-9 to yield malbrancheamide C, and, to a lesser extend, at C-8 to yield isomalbrancheamide C. Finally, malA can brominate C-9 monochlorinated malbrancheamide B at C-8 to yield malbrancheamide D, or C-8 monochlorinated isomalbrancheamide B at C-9 to produce isomalbrancheamide D. In Malbranchea aurantiaca, this protein is Prenyltransferase malE.